The sequence spans 445 residues: UPF0210 protein SPP_0289 (445 aa).

This sequence belongs to the UPF0210 family. As to quaternary structure, homodimer.

The protein is UPF0210 protein SPP_0289 of Streptococcus pneumoniae (strain P1031).